The primary structure comprises 299 residues: Regucalcin (299 aa).

An a divalent metal cation-binding site is contributed by glutamate 18. Substrate is bound by residues arginine 101, asparagine 103, and glutamate 121. 2 residues coordinate a divalent metal cation: asparagine 154 and aspartate 204. The Proton donor/acceptor role is filled by aspartate 204. Residues lysine 244 and lysine 253 each carry the N6-succinyllysine modification.

Belongs to the SMP-30/CGR1 family. Monomer. Zn(2+) is required as a cofactor. Requires Mn(2+) as cofactor. Ca(2+) serves as cofactor. It depends on Mg(2+) as a cofactor.

The protein resides in the cytoplasm. The catalysed reaction is D-glucono-1,5-lactone + H2O = D-gluconate + H(+). It functions in the pathway cofactor biosynthesis; L-ascorbate biosynthesis via UDP-alpha-D-glucuronate pathway; L-ascorbate from UDP-alpha-D-glucuronate: step 3/4. In terms of biological role, gluconolactonase with low activity towards other sugar lactones, including gulonolactone and galactonolactone. Catalyzes a key step in ascorbic acid (vitamin C) biosynthesis. Can also hydrolyze diisopropyl phosphorofluoridate and phenylacetate (in vitro). Calcium-binding protein. Modulates Ca(2+) signaling, and Ca(2+)-dependent cellular processes and enzyme activities. The sequence is that of Regucalcin (RGN) from Bos taurus (Bovine).